The primary structure comprises 850 residues: Pre-mRNA-splicing factor SYF1 (850 aa).

12 HAT repeats span residues 10–42 (GLLC…FKSS), 46–78 (CTFQ…VVLQ), 90–122 (SEIL…FLVE), 126–160 (YEIT…FADD), 208–247 (GDVK…LLVN), 408–442 (AALR…VYAS), 444–480 (NDVK…LFVK), 500–531 (GKFD…LLES), 574–609 (NFYE…KIIK), 612–653 (LNIE…QYEQ), 708–744 (NDHN…FETE), and 746–782 (MEFN…FELN).

The protein belongs to the crooked-neck family. As to quaternary structure, associated with the spliceosome.

Its subcellular location is the nucleus. Involved in pre-mRNA splicing and cell cycle progression. The chain is Pre-mRNA-splicing factor SYF1 (SYF1) from Debaryomyces hansenii (strain ATCC 36239 / CBS 767 / BCRC 21394 / JCM 1990 / NBRC 0083 / IGC 2968) (Yeast).